Consider the following 930-residue polypeptide: A disintegrin and metalloproteinase with thrombospondin motifs 5 (930 aa).

Positions 1–21 (MRLEWAPLLLLLLLLSASCLS) are cleaved as a signal peptide. Residues 22–261 (LAADSPAAAP…PQTWWRRRRR (240 aa)) constitute a propeptide that is removed on maturation. The segment covering 31 to 53 (PAQDKTRQPQAAAAAAEPDQPQG) has biased composition (low complexity). 2 disordered regions span residues 31 to 68 (PAQD…LAGQ) and 207 to 231 (ASCE…SRRR). A Cysteine switch motif is present at residues 207–214 (ASCETPAS). Cysteine 209 provides a ligand contact to Zn(2+). Residues 211 to 225 (TPASPSGPQESPSVH) are compositionally biased toward polar residues. A Peptidase M12B domain is found at 267 to 476 (RQVELLLVAD…GHGNCLLDLP (210 aa)). 8 disulfides stabilise this stretch: cysteine 342–cysteine 394, cysteine 371–cysteine 376, cysteine 388–cysteine 471, cysteine 426–cysteine 455, cysteine 497–cysteine 519, cysteine 508–cysteine 529, cysteine 514–cysteine 548, and cysteine 542–cysteine 553. Histidine 410 serves as a coordination point for Zn(2+). Glutamate 411 is an active-site residue. 2 residues coordinate Zn(2+): histidine 414 and histidine 420. The Disintegrin domain occupies 485–566 (ELPGQTYDAT…TKKKYYSTSS (82 aa)). Asparagine 498 carries an N-linked (GlcNAc...) asparagine glycan. The region spanning 567-622 (HGNWGSWGPWGQCSRSCGGGVQFAYRHCNNPAPRNSGRYCTGKRAIYRSCSVTPCP) is the TSP type-1 1 domain. 2 C-linked (Man) tryptophan glycosylation sites follow: tryptophan 570 and tryptophan 573. 3 disulfide bridges follow: cysteine 579-cysteine 616, cysteine 583-cysteine 621, and cysteine 594-cysteine 606. Residue serine 582 is glycosylated (O-linked (Fuc...) serine). Asparagine 728, asparagine 802, and asparagine 807 each carry an N-linked (GlcNAc...) asparagine glycan. The interval 732 to 874 (TKIIGTFNKK…HGSNKVGPHS (143 aa)) is spacer. Positions 875 to 929 (TQLQWVTGPWLACSRTCDTGWHTRTVQCQDGNRKLAKGCLLSQRPSAFKQCLLKK) constitute a TSP type-1 2 domain.

Requires Zn(2+) as cofactor. Post-translationally, the precursor is cleaved by furin and PCSK7 outside of the cell. In terms of processing, glycosylated. Can be O-fucosylated by POFUT2 on a serine or a threonine residue found within the consensus sequence C1-X(2)-(S/T)-C2-G of the TSP type-1 repeat domains where C1 and C2 are the first and second cysteine residue of the repeat, respectively. Fucosylated repeats can then be further glycosylated by the addition of a beta-1,3-glucose residue by the glucosyltransferase, B3GALTL. Fucosylation mediates the efficient secretion of ADAMTS family members. Can also be C-glycosylated with one or two mannose molecules on tryptophan residues within the consensus sequence W-X-X-W of the TPRs, and N-glycosylated. These other glycosylations can also facilitate secretion. In terms of tissue distribution, expressed in skeletal muscle.

Its subcellular location is the secreted. It is found in the extracellular space. The protein localises to the extracellular matrix. Metalloproteinase that plays an important role in connective tissue organization, development, inflammation and cell migration. Extracellular matrix (ECM) degrading enzyme that shows proteolytic activity toward the hyalectan group of chondroitin sulfate proteoglycans (CSPGs) including ACAN, VCAN, BCAN and NCAN. Cleavage within the hyalectans occurs at Glu-Xaa recognition motifs. Plays a role in embryonic development, including limb and cardiac morphogenesis, and skeletal muscle development through its VCAN remodeling properties. Cleaves VCAN in the pericellular matrix surrounding myoblasts, facilitating myoblast contact and fusion which is required for skeletal muscle development and regeneration. Participates in the development of brown adipose tissue and browning of white adipose tissue. Plays an important role for T-lymphocyte migration from draining lymph nodes following viral infection. The polypeptide is A disintegrin and metalloproteinase with thrombospondin motifs 5 (Adamts5) (Mus musculus (Mouse)).